Here is a 317-residue protein sequence, read N- to C-terminus: Methionyl-tRNA formyltransferase (317 aa).

112-115 (SLLP) contributes to the (6S)-5,6,7,8-tetrahydrofolate binding site.

The protein belongs to the Fmt family.

The enzyme catalyses L-methionyl-tRNA(fMet) + (6R)-10-formyltetrahydrofolate = N-formyl-L-methionyl-tRNA(fMet) + (6S)-5,6,7,8-tetrahydrofolate + H(+). Functionally, attaches a formyl group to the free amino group of methionyl-tRNA(fMet). The formyl group appears to play a dual role in the initiator identity of N-formylmethionyl-tRNA by promoting its recognition by IF2 and preventing the misappropriation of this tRNA by the elongation apparatus. The protein is Methionyl-tRNA formyltransferase of Mycoplasma mycoides subsp. mycoides SC (strain CCUG 32753 / NCTC 10114 / PG1).